A 156-amino-acid polypeptide reads, in one-letter code: Lipoprotein signal peptidase (156 aa).

Helical transmembrane passes span 5 to 25, 64 to 84, and 89 to 109; these read FKFI…DQWV, YLHL…RTLL, and IAFG…FIHG. Catalysis depends on residues Asp-113 and Asp-130. The helical transmembrane segment at 122–142 threads the bilayer; that stretch reads NFAIFNVADVMINISVALILI.

It belongs to the peptidase A8 family.

The protein localises to the cell inner membrane. The catalysed reaction is Release of signal peptides from bacterial membrane prolipoproteins. Hydrolyzes -Xaa-Yaa-Zaa-|-(S,diacylglyceryl)Cys-, in which Xaa is hydrophobic (preferably Leu), and Yaa (Ala or Ser) and Zaa (Gly or Ala) have small, neutral side chains.. It functions in the pathway protein modification; lipoprotein biosynthesis (signal peptide cleavage). In terms of biological role, this protein specifically catalyzes the removal of signal peptides from prolipoproteins. This is Lipoprotein signal peptidase from Campylobacter jejuni subsp. jejuni serotype O:2 (strain ATCC 700819 / NCTC 11168).